Reading from the N-terminus, the 466-residue chain is Alpha-1A adrenergic receptor (466 aa).

The Extracellular segment spans residues 1-25; sequence MVFLSGNASDSSNCTQPPAPVNIPK. N-linked (GlcNAc...) asparagine glycosylation is found at asparagine 7 and asparagine 13. The chain crosses the membrane as a helical span at residues 26 to 51; sequence AILLGVILGVLILFGVPGNILVILSV. The Cytoplasmic segment spans residues 52–63; that stretch reads ACHRHLHSVTHY. A helical transmembrane segment spans residues 64–89; that stretch reads YIVNLAVADLLLTSTVLPFSAIFEIL. Over 90–99 the chain is Extracellular; sequence GYWAFGRVFC. Residues 100–122 form a helical membrane-spanning segment; the sequence is NIWAAVDVLCCTASIMSLCIISI. Topologically, residues 123–143 are cytoplasmic; sequence DRYIGVSYPLRYPTIVTQRRG. The chain crosses the membrane as a helical span at residues 144-168; it reads LRALLCLWALSLVISIGPLFGWRQP. Over 169-181 the chain is Extracellular; it reads APQDETICQINED. The chain crosses the membrane as a helical span at residues 182–205; the sequence is PSYVLFSALGSFYVPLAIILVMYC. Residues 206–272 are Cytoplasmic-facing; the sequence is RVYVVAKRES…KFSREKKAAK (67 aa). A helical membrane pass occupies residues 273 to 297; that stretch reads TLGIVVGCFVLCWLPFFLVMPIGSF. Residues 298–304 are Extracellular-facing; the sequence is FPDFKPS. A helical membrane pass occupies residues 305–329; that stretch reads ETVFKIVFWLGYLNSCINPIIYPCS. Residues 330–466 are Cytoplasmic-facing; that stretch reads SQEFKKAFQN…ISLSENGEEV (137 aa). The Nuclear localization signal motif lies at 334 to 349; it reads KKAFQNVLKIQCLRRK. Cysteine 345 carries the S-palmitoyl cysteine lipid modification.

It belongs to the G-protein coupled receptor 1 family. Adrenergic receptor subfamily. ADRA1A sub-subfamily. Homo- and heterooligomer. Heterooligomerizes with ADRA1B homooligomers in cardiac myocytes. Interacts with CAVIN4.

It localises to the nucleus membrane. It is found in the cell membrane. The protein resides in the cytoplasm. The protein localises to the membrane. Its subcellular location is the caveola. Its function is as follows. This alpha-adrenergic receptor mediates its action by association with G proteins that activate a phosphatidylinositol-calcium second messenger system. Its effect is mediated by G(q) and G(11) proteins. Nuclear ADRA1A-ADRA1B heterooligomers regulate phenylephrine (PE)-stimulated ERK signaling in cardiac myocytes. The sequence is that of Alpha-1A adrenergic receptor (ADRA1A) from Cavia porcellus (Guinea pig).